Here is a 660-residue protein sequence, read N- to C-terminus: Acetyl-coenzyme A synthetase (660 aa).

Residues 197–200 and threonine 317 each bind CoA; that span reads RGGK. Residues 397–399, 421–426, aspartate 512, and arginine 528 each bind ATP; these read GEP and DTFWQT. Serine 536 serves as a coordination point for CoA. An ATP-binding site is contributed by arginine 539. Residues valine 550 and valine 555 each coordinate Mg(2+). N6-acetyllysine is present on lysine 625.

Belongs to the ATP-dependent AMP-binding enzyme family. It depends on Mg(2+) as a cofactor. Acetylated. Deacetylation by the SIR2-homolog deacetylase activates the enzyme.

The catalysed reaction is acetate + ATP + CoA = acetyl-CoA + AMP + diphosphate. In terms of biological role, catalyzes the conversion of acetate into acetyl-CoA (AcCoA), an essential intermediate at the junction of anabolic and catabolic pathways. AcsA undergoes a two-step reaction. In the first half reaction, AcsA combines acetate with ATP to form acetyl-adenylate (AcAMP) intermediate. In the second half reaction, it can then transfer the acetyl group from AcAMP to the sulfhydryl group of CoA, forming the product AcCoA. This is Acetyl-coenzyme A synthetase from Ralstonia pickettii (strain 12J).